The chain runs to 371 residues: Carlactonoate CLA methyltransferase (371 aa).

Tyr21 serves as a coordination point for S-adenosyl-L-homocysteine. Residue Gln28 coordinates (11R)-carlactonoate. The S-adenosyl-L-homocysteine site is built by Cys62, Asn67, Asp101, Leu102, Ser141, and Phe142. (11R)-carlactonoate contacts are provided by His162 and Trp163. Mg(2+) contacts are provided by Asn180, Asp266, Tyr268, and Asp269.

This sequence belongs to the methyltransferase superfamily. Type-7 methyltransferase family. SABATH subfamily. As to quaternary structure, homodimer. The cofactor is Mg(2+).

The enzyme catalyses (11R)-carlactonoate + S-adenosyl-L-methionine = (11R)-methyl carlactonoate + S-adenosyl-L-homocysteine. Its function is as follows. Methyltransferase involved in the biosynthesis of strigolactone natural products, bioactive compounds promoting plant fitness and soil microbe interactions, but preventing shoot branching. Catalyzes the biosynthesis of (11R)-methyl carlactonoate (MeCLA) from (11R)-carlactonoate (CLA), downstream of MAX1; MeCLA is probably biologically active as a hormone regulating shoot branching and serves as a precursor of non-canonical strigolactones (SLs). The chain is Carlactonoate CLA methyltransferase from Arabidopsis thaliana (Mouse-ear cress).